The chain runs to 729 residues: DNA topoisomerase 3 (729 aa).

One can recognise a Toprim domain in the interval 3–136 (KSVVIAEKPS…IKRLWISSVT (134 aa)). Mg(2+) is bound by residues Glu9 and Asp105. One can recognise a Topo IA-type catalytic domain in the interval 153-594 (YDNLYASAVA…EMKNYTKEIV (442 aa)). Residues 187 to 192 (NCGRVQ) form an interaction with DNA region. Tyr310 serves as the catalytic O-(5'-phospho-DNA)-tyrosine intermediate. The span at 686 to 713 (ERRKKESGNKADKRDVQKYMKQQNKEEE) shows a compositional bias: basic and acidic residues. The tract at residues 686–719 (ERRKKESGNKADKRDVQKYMKQQNKEEEPLNNPF) is disordered.

Belongs to the type IA topoisomerase family. Mg(2+) serves as cofactor.

It catalyses the reaction ATP-independent breakage of single-stranded DNA, followed by passage and rejoining.. Functionally, releases the supercoiling and torsional tension of DNA, which is introduced during the DNA replication and transcription, by transiently cleaving and rejoining one strand of the DNA duplex. Introduces a single-strand break via transesterification at a target site in duplex DNA. The scissile phosphodiester is attacked by the catalytic tyrosine of the enzyme, resulting in the formation of a DNA-(5'-phosphotyrosyl)-enzyme intermediate and the expulsion of a 3'-OH DNA strand. The free DNA strand then undergoes passage around the unbroken strand, thus removing DNA supercoils. Finally, in the religation step, the DNA 3'-OH attacks the covalent intermediate to expel the active-site tyrosine and restore the DNA phosphodiester backbone. The protein is DNA topoisomerase 3 of Bacillus cereus (strain ATCC 14579 / DSM 31 / CCUG 7414 / JCM 2152 / NBRC 15305 / NCIMB 9373 / NCTC 2599 / NRRL B-3711).